A 113-amino-acid polypeptide reads, in one-letter code: ATP-dependent Clp protease adapter protein ClpS (113 aa).

A disordered region spans residues 1 to 24 (MTAQLHMMSDKHDQDNDASVLLQT).

It belongs to the ClpS family. Binds to the N-terminal domain of the chaperone ClpA.

Involved in the modulation of the specificity of the ClpAP-mediated ATP-dependent protein degradation. The polypeptide is ATP-dependent Clp protease adapter protein ClpS (Ruegeria pomeroyi (strain ATCC 700808 / DSM 15171 / DSS-3) (Silicibacter pomeroyi)).